A 1110-amino-acid chain; its full sequence is Isoleucine--tRNA ligase (1110 aa).

The short motif at 47-57 (PSANGTPGIHH) is the 'HIGH' region element. Residues 658–662 (KMSKR) carry the 'KMSKS' region motif. K661 contributes to the ATP binding site.

The protein belongs to the class-I aminoacyl-tRNA synthetase family. IleS type 2 subfamily. In terms of assembly, monomer. Zn(2+) is required as a cofactor.

Its subcellular location is the cytoplasm. It catalyses the reaction tRNA(Ile) + L-isoleucine + ATP = L-isoleucyl-tRNA(Ile) + AMP + diphosphate. In terms of biological role, catalyzes the attachment of isoleucine to tRNA(Ile). As IleRS can inadvertently accommodate and process structurally similar amino acids such as valine, to avoid such errors it has two additional distinct tRNA(Ile)-dependent editing activities. One activity is designated as 'pretransfer' editing and involves the hydrolysis of activated Val-AMP. The other activity is designated 'posttransfer' editing and involves deacylation of mischarged Val-tRNA(Ile). The sequence is that of Isoleucine--tRNA ligase from Cytophaga hutchinsonii (strain ATCC 33406 / DSM 1761 / CIP 103989 / NBRC 15051 / NCIMB 9469 / D465).